The chain runs to 501 residues: NAD(P)H-quinone oxidoreductase chain 4, chloroplastic (501 aa).

14 consecutive transmembrane segments (helical) span residues 5 to 25 (FPWL…IFFL), 38 to 58 (TCIC…HFQL), 88 to 108 (IGPI…AWPV), 114 to 131 (LFYL…GLFS), 135 to 155 (LLLF…LLSM), 168 to 188 (FILY…GMGL), 209 to 229 (ALEI…SPII), 243 to 263 (HYST…YGLI), 273 to 293 (AHSL…IYAA), 306 to 326 (IACS…SITD), 331 to 351 (GAIL…FLSG), 387 to 407 (LALP…GIIT), 417 to 437 (ILIT…LLSM), and 464 to 484 (FVSI…DCVF).

It belongs to the complex I subunit 4 family.

Its subcellular location is the plastid. It localises to the chloroplast thylakoid membrane. The enzyme catalyses a plastoquinone + NADH + (n+1) H(+)(in) = a plastoquinol + NAD(+) + n H(+)(out). The catalysed reaction is a plastoquinone + NADPH + (n+1) H(+)(in) = a plastoquinol + NADP(+) + n H(+)(out). The sequence is that of NAD(P)H-quinone oxidoreductase chain 4, chloroplastic from Dioscorea elephantipes (Elephant's foot yam).